We begin with the raw amino-acid sequence, 993 residues long: UPF0182 protein MAV_4137 (993 aa).

7 helical membrane passes run 18 to 38, 63 to 83, 113 to 133, 175 to 195, 210 to 230, 254 to 274, and 287 to 307; these read ILIL…RLID, FVVF…GLAV, LVSI…AQSY, FVAV…FGGI, IQLV…YWLD, AVLP…AAVF, and IGLV…PLIV. Residues 903 to 941 form a disordered region; sequence NIQPTEGGAPAASPPANAPAPAVTPGSAPPVAAPPVPDG. A compositionally biased stretch (pro residues) spans 929 to 939; it reads SAPPVAAPPVP.

The protein belongs to the UPF0182 family.

The protein localises to the cell membrane. The protein is UPF0182 protein MAV_4137 of Mycobacterium avium (strain 104).